The chain runs to 142 residues: Transcription antitermination protein NusB (142 aa).

The protein belongs to the NusB family.

Functionally, involved in transcription antitermination. Required for transcription of ribosomal RNA (rRNA) genes. Binds specifically to the boxA antiterminator sequence of the ribosomal RNA (rrn) operons. The chain is Transcription antitermination protein NusB from Borreliella burgdorferi (strain ATCC 35210 / DSM 4680 / CIP 102532 / B31) (Borrelia burgdorferi).